We begin with the raw amino-acid sequence, 120 residues long: Large ribosomal subunit protein uL22 (120 aa).

The disordered stretch occupies residues 1-22 (MLVNRRYTAKGKNLPSSPKKVR).

The protein belongs to the universal ribosomal protein uL22 family. As to quaternary structure, part of the 50S ribosomal subunit.

Its function is as follows. This protein binds specifically to 23S rRNA; its binding is stimulated by other ribosomal proteins, e.g. L4, L17, and L20. It is important during the early stages of 50S assembly. It makes multiple contacts with different domains of the 23S rRNA in the assembled 50S subunit and ribosome. The globular domain of the protein is located near the polypeptide exit tunnel on the outside of the subunit, while an extended beta-hairpin is found that lines the wall of the exit tunnel in the center of the 70S ribosome. This Borreliella burgdorferi (strain ATCC 35210 / DSM 4680 / CIP 102532 / B31) (Borrelia burgdorferi) protein is Large ribosomal subunit protein uL22.